Here is a 177-residue protein sequence, read N- to C-terminus: Large ribosomal subunit protein uL6 (177 aa).

Belongs to the universal ribosomal protein uL6 family. As to quaternary structure, part of the 50S ribosomal subunit.

Its function is as follows. This protein binds to the 23S rRNA, and is important in its secondary structure. It is located near the subunit interface in the base of the L7/L12 stalk, and near the tRNA binding site of the peptidyltransferase center. In Brucella abortus (strain S19), this protein is Large ribosomal subunit protein uL6.